A 542-amino-acid chain; its full sequence is Chaperonin GroEL 2 (542 aa).

ATP-binding positions include 29-32 (TLGP), 86-90 (DGTTT), Gly-413, 477-479 (NAA), and Asp-493.

This sequence belongs to the chaperonin (HSP60) family. Forms a cylinder of 14 subunits composed of two heptameric rings stacked back-to-back. Interacts with the co-chaperonin GroES.

Its subcellular location is the cytoplasm. The catalysed reaction is ATP + H2O + a folded polypeptide = ADP + phosphate + an unfolded polypeptide.. In terms of biological role, together with its co-chaperonin GroES, plays an essential role in assisting protein folding. The GroEL-GroES system forms a nano-cage that allows encapsulation of the non-native substrate proteins and provides a physical environment optimized to promote and accelerate protein folding. The polypeptide is Chaperonin GroEL 2 (Frankia alni (strain DSM 45986 / CECT 9034 / ACN14a)).